The sequence spans 159 residues: UPF0587 protein v1g245604 (159 aa).

Zn(2+) is bound by residues cysteine 33, cysteine 36, cysteine 67, and cysteine 70.

It belongs to the UPF0587 family.

In Nematostella vectensis (Starlet sea anemone), this protein is UPF0587 protein v1g245604.